The primary structure comprises 276 residues: N-alpha-acetyltransferase 60 (276 aa).

In terms of domain architecture, N-acetyltransferase spans 34 to 239 (VQLRFLVPDD…WTLLDHIKHY (206 aa)). Tyr59 is a binding site for substrate. Tyr139 is an active-site residue. Leu141 is a binding site for substrate. Residues 143–145 (LGV) and 151–156 (RNGIGS) contribute to the acetyl-CoA site. His180 is a catalytic residue. Acetyl-CoA is bound by residues Asn185 and 192–195 (YEKR). The required for homodimerization stretch occupies residues 204–215 (PYYYNIRGKGKD). Residue Tyr207 coordinates substrate.

Belongs to the acetyltransferase family. NAA60 subfamily.

The catalysed reaction is N-terminal L-methionyl-[transmembrane protein] + acetyl-CoA = N-terminal N(alpha)-acetyl-L-methionyl-[transmembrane protein] + CoA + H(+). It catalyses the reaction L-lysyl-[protein] + acetyl-CoA = N(6)-acetyl-L-lysyl-[protein] + CoA + H(+). Its function is as follows. Displays alpha (N-terminal) acetyltransferase activity towards a range of N-terminal sequences including those starting with Met-Lys, Met-Val, Met-Ala and Met-Met. Required for normal chromosomal segregation during anaphase. Shows histone acetyltransferase activity toward free histones. Functionally, does not show histone acetyltransferase activity toward free histones. The protein is N-alpha-acetyltransferase 60 of Drosophila melanogaster (Fruit fly).